We begin with the raw amino-acid sequence, 158 residues long: NADPH-dependent 7-cyano-7-deazaguanine reductase (158 aa).

Residues Met1–Pro37 are disordered. Over residues Glu27–Pro37 the composition is skewed to basic and acidic residues. Cys56 serves as the catalytic Thioimide intermediate. Catalysis depends on Asp63, which acts as the Proton donor. Substrate-binding positions include Val78–Ser80 and His97–Glu98.

The protein belongs to the GTP cyclohydrolase I family. QueF type 1 subfamily.

Its subcellular location is the cytoplasm. The enzyme catalyses 7-aminomethyl-7-carbaguanine + 2 NADP(+) = 7-cyano-7-deazaguanine + 2 NADPH + 3 H(+). It functions in the pathway tRNA modification; tRNA-queuosine biosynthesis. Its function is as follows. Catalyzes the NADPH-dependent reduction of 7-cyano-7-deazaguanine (preQ0) to 7-aminomethyl-7-deazaguanine (preQ1). The sequence is that of NADPH-dependent 7-cyano-7-deazaguanine reductase from Bradyrhizobium sp. (strain BTAi1 / ATCC BAA-1182).